We begin with the raw amino-acid sequence, 1485 residues long: Chromosome partition protein MukB (1485 aa).

34 to 41 contacts ATP; the sequence is GGNGAGKS. 6 coiled-coil regions span residues 337–480, 509–605, 780–805, 835–915, 977–1116, and 1210–1235; these read LNLV…QAYQ, QHLA…PVWL, RAARENRLETLYQERDRLAERYATLS, EAEI…IQQH, GMLT…AKAG, and EAIEQMEIELGRLTEELTAREQKLAI. The tract at residues 666-783 is flexible hinge; the sequence is PSGAEDARLI…EVPLFGRAAR (118 aa).

The protein belongs to the SMC family. MukB subfamily. Homodimerization via its hinge domain. Binds to DNA via its C-terminal region. Interacts, and probably forms a ternary complex, with MukE and MukF via its C-terminal region. The complex formation is stimulated by calcium or magnesium. Interacts with tubulin-related protein FtsZ.

It is found in the cytoplasm. It localises to the nucleoid. Functionally, plays a central role in chromosome condensation, segregation and cell cycle progression. Functions as a homodimer, which is essential for chromosome partition. Involved in negative DNA supercoiling in vivo, and by this means organize and compact chromosomes. May achieve or facilitate chromosome segregation by condensation DNA from both sides of a centrally located replisome during cell division. The sequence is that of Chromosome partition protein MukB from Yersinia pestis bv. Antiqua (strain Antiqua).